The chain runs to 841 residues: Putative helicase R592 (841 aa).

Residues 72 to 309 (STFVIETNSA…RRYVNKIFGQ (238 aa)) form the Helicase ATP-binding domain. 85-92 (DKVGAGKT) serves as a coordination point for ATP. The segment covering 195 to 205 (KLPVKTTKKGG) has biased composition (basic residues). Residues 195–215 (KLPVKTTKKGGSKTQNKAQND) are disordered. Over residues 206–215 (SKTQNKAQND) the composition is skewed to polar residues. The DEAD box signature appears at 266-269 (DEMD). The stretch at 413–450 (QDVDAHENRKKNIMNNIARCKTKLESIKEKINSIKDEC) forms a coiled coil. An RING-type; degenerate zinc finger spans residues 451-491 (CFICTDPFENPTIMNCCKSIFCLKCLLTTLKTVGSKCPYCR). The region spanning 531–682 (VLEQVLSYIS…WMITNPTDLN (152 aa)) is the Helicase C-terminal domain. Positions 678–841 (PTDLNEEPDE…KAPVRKLIKV (164 aa)) are disordered. Positions 681-697 (LNEEPDEESDEGSDEDV) are enriched in acidic residues. Over residues 698–725 (EKSKDKKSSDKKSSDKKKSEKKSSDKKS) the composition is skewed to basic and acidic residues. Residues 726-749 (SNKKNSKKKTYVKPKSSKKTSQKV) are compositionally biased toward basic residues. Composition is skewed to acidic residues over residues 765 to 774 (DSDDLDDSDD) and 782 to 804 (SDSD…ESEI). 2 stretches are compositionally biased toward basic residues: residues 809 to 821 (KSKK…KKNK) and 828 to 841 (TLKK…LIKV).

The chain is Putative helicase R592 from Acanthamoeba polyphaga mimivirus (APMV).